The chain runs to 272 residues: Orotidine 5'-phosphate decarboxylase (272 aa).

Residue Lys95 is the Proton donor of the active site.

The protein belongs to the OMP decarboxylase family. Type 2 subfamily.

It catalyses the reaction orotidine 5'-phosphate + H(+) = UMP + CO2. It functions in the pathway pyrimidine metabolism; UMP biosynthesis via de novo pathway; UMP from orotate: step 2/2. The chain is Orotidine 5'-phosphate decarboxylase from Bordetella avium (strain 197N).